Here is a 126-residue protein sequence, read N- to C-terminus: Fluoride-specific ion channel FluC (126 aa).

The next 3 membrane-spanning stretches (helical) occupy residues 35–55 (WWTL…IGLL), 71–91 (VGML…WLLF), and 101–121 (LYVV…MILI). 2 residues coordinate Na(+): G75 and T78.

It belongs to the fluoride channel Fluc/FEX (TC 1.A.43) family.

Its subcellular location is the cell inner membrane. It carries out the reaction fluoride(in) = fluoride(out). Its activity is regulated as follows. Na(+) is not transported, but it plays an essential structural role and its presence is essential for fluoride channel function. In terms of biological role, fluoride-specific ion channel. Important for reducing fluoride concentration in the cell, thus reducing its toxicity. The protein is Fluoride-specific ion channel FluC of Sphingopyxis alaskensis (strain DSM 13593 / LMG 18877 / RB2256) (Sphingomonas alaskensis).